The chain runs to 1024 residues: Seizure 6-like protein (1024 aa).

A signal peptide spans 1 to 28 (MPAARPPAAGLRGISLFLALLLGSPAAA). Residues 29 to 958 (LERDALPEGD…ETSLEGGNMA (930 aa)) are Extracellular-facing. Disordered stretches follow at residues 33–77 (ALPE…SQSA), 108–184 (RPKH…EVPL), and 212–234 (AHTL…EAPQ). Serine 49 carries an O-linked (GalNAc...) serine glycan. Basic and acidic residues predominate over residues 56-66 (SPGKEHPEERV). Positions 110 to 120 (KHALPPKKKLP) are enriched in basic residues. The segment covering 138 to 162 (SAATVQRAGSQPASQGLDLLSSSTE) has biased composition (polar residues). O-glycosylated at one site regions lie at residues 147-161 (SQPA…SSST) and 176-180 (SEEAS). A disulfide bridge links cysteine 281 with cysteine 308. The CUB 1 domain occupies 281 to 389 (CSVSFSNPEG…GTFQLHYQAF (109 aa)). Asparagine 311, asparagine 328, and asparagine 350 each carry an N-linked (GlcNAc...) asparagine glycan. One can recognise a Sushi 1 domain in the interval 391–450 (LSCNFPRRPDSGDVTVMDLHSGGVAHFHCHLGYELQGAKMLTCINASKPHWSSQEPICSA). Cystine bridges form between cysteine 393–cysteine 433 and cysteine 419–cysteine 448. N-linked (GlcNAc...) asparagine glycans are attached at residues asparagine 435, asparagine 458, asparagine 474, asparagine 514, asparagine 576, asparagine 618, asparagine 674, and asparagine 742. The CUB 2 domain maps to 452-562 (CGGAVHNATI…STFNIRFEAF (111 aa)). Positions 565 to 626 (GHCYEPYIQN…WNDTEPLCRA (62 aa)) constitute a Sushi 2 domain. 2 disulfide bridges follow: cysteine 567/cysteine 609 and cysteine 594/cysteine 624. Residues 628–739 (CGGELSAVAG…QGFIMNYIEV (112 aa)) form the CUB 3 domain. Sushi domains follow at residues 743 to 802 (DSCS…FCEK), 804 to 867 (MYCT…HCVS), and 871 to 932 (LACD…VCKV). Disulfide bonds link cysteine 745-cysteine 787, cysteine 773-cysteine 800, cysteine 806-cysteine 848, cysteine 834-cysteine 865, cysteine 873-cysteine 915, and cysteine 901-cysteine 930. Residues 959–979 (LAIFIPVLIISLLLGGAYIYI) form a helical membrane-spanning segment. Residues 980 to 1024 (TRCRYYSNLRLPLMYSHPYSQITVETEFDNPIYETGETREYEVSI) lie on the Cytoplasmic side of the membrane.

Belongs to the SEZ6 family. In terms of processing, O-glycosylated. Widely expressed, including adult and fetal brains and lungs. Not expressed in all lung cancer cell lines.

The protein localises to the endoplasmic reticulum membrane. Functionally, may contribute to specialized endoplasmic reticulum functions in neurons. This Homo sapiens (Human) protein is Seizure 6-like protein (SEZ6L).